The following is a 283-amino-acid chain: Acetyl-coenzyme A carboxylase carboxyl transferase subunit beta (283 aa).

The 261-residue stretch at 23 to 283 folds into the CoA carboxyltransferase N-terminal domain; the sequence is LWIKCPSCSE…DFLMAGKAAA (261 aa). 4 residues coordinate Zn(2+): C27, C30, C46, and C49. Residues 27–49 form a C4-type zinc finger; the sequence is CPSCSEMLFTKEYEDNLSVCPHC.

The protein belongs to the AccD/PCCB family. In terms of assembly, acetyl-CoA carboxylase is a heterohexamer composed of biotin carboxyl carrier protein (AccB), biotin carboxylase (AccC) and two subunits each of ACCase subunit alpha (AccA) and ACCase subunit beta (AccD). Zn(2+) is required as a cofactor.

It is found in the cytoplasm. It catalyses the reaction N(6)-carboxybiotinyl-L-lysyl-[protein] + acetyl-CoA = N(6)-biotinyl-L-lysyl-[protein] + malonyl-CoA. Its pathway is lipid metabolism; malonyl-CoA biosynthesis; malonyl-CoA from acetyl-CoA: step 1/1. Functionally, component of the acetyl coenzyme A carboxylase (ACC) complex. Biotin carboxylase (BC) catalyzes the carboxylation of biotin on its carrier protein (BCCP) and then the CO(2) group is transferred by the transcarboxylase to acetyl-CoA to form malonyl-CoA. The polypeptide is Acetyl-coenzyme A carboxylase carboxyl transferase subunit beta (Novosphingobium aromaticivorans (strain ATCC 700278 / DSM 12444 / CCUG 56034 / CIP 105152 / NBRC 16084 / F199)).